The chain runs to 178 residues: Interleukin-1 receptor antagonist protein (178 aa).

Positions 1 to 26 (MEICWGPYSHLISLLLILLFHSEAAC) are cleaved as a signal peptide. Residues C92 and C142 are joined by a disulfide bond. A glycan (N-linked (GlcNAc...) asparagine) is linked at N110.

This sequence belongs to the IL-1 family.

Its subcellular location is the secreted. The protein localises to the cytoplasm. Functionally, anti-inflammatory antagonist of interleukin-1 family of proinflammatory cytokines such as interleukin-1beta/IL1B and interleukin-1alpha/IL1A. Protects from immune dysregulation and uncontrolled systemic inflammation triggered by IL1 for a range of innate stimulatory agents such as pathogens. The chain is Interleukin-1 receptor antagonist protein (Il1rn) from Mus musculus (Mouse).